The primary structure comprises 285 residues: Tropomyosin alpha-3 chain (285 aa).

The stretch at 1-285 (MMEAIKKKMQ…DHALNDMTSI (285 aa)) forms a coiled coil. N-acetylmethionine is present on M2. M2 carries the post-translational modification N-acetylalanine. Residues 16-41 (KENALDRAEQAEAEQKQAEERSKQLE) are compositionally biased toward basic and acidic residues. The interval 16–44 (KENALDRAEQAEAEQKQAEERSKQLEDEL) is disordered. T54 bears the Phosphothreonine mark. Phosphoserine occurs at positions 62 and 88. Phosphothreonine is present on T109. N6-acetyllysine occurs at positions 125 and 177. S207 carries the phosphoserine modification. Y215 carries the N6-acetyllysine modification. The residue at position 216 (S216) is a Phosphoserine. Residue T253 is modified to Phosphothreonine. A Phosphotyrosine modification is found at Y262. S272 is subject to Phosphoserine. T283 is modified (phosphothreonine). S284 carries the post-translational modification Phosphoserine.

It belongs to the tropomyosin family. In terms of assembly, homodimer. Heterodimer of an alpha (TPM1, TPM3 or TPM4) and a beta (TPM2) chain. Interacts with TMOD1. Interacts with TNNT1.

It is found in the cytoplasm. Its subcellular location is the cytoskeleton. Binds to actin filaments in muscle and non-muscle cells. Plays a central role, in association with the troponin complex, in the calcium dependent regulation of vertebrate striated muscle contraction. Smooth muscle contraction is regulated by interaction with caldesmon. In non-muscle cells is implicated in stabilizing cytoskeleton actin filaments. In Homo sapiens (Human), this protein is Tropomyosin alpha-3 chain (TPM3).